The following is a 363-amino-acid chain: Fructose-bisphosphate aldolase 2 (363 aa).

Residue serine 61 coordinates D-glyceraldehyde 3-phosphate. The Proton donor role is filled by aspartate 109. Zn(2+) contacts are provided by histidine 110, aspartate 144, glutamate 174, and histidine 226. Glycine 227 is a dihydroxyacetone phosphate binding site. Histidine 264 contributes to the Zn(2+) binding site. 265–267 (GGS) is a dihydroxyacetone phosphate binding site.

The protein belongs to the class II fructose-bisphosphate aldolase family. Homodimer. Zn(2+) serves as cofactor.

The enzyme catalyses beta-D-fructose 1,6-bisphosphate = D-glyceraldehyde 3-phosphate + dihydroxyacetone phosphate. It participates in carbohydrate degradation; glycolysis; D-glyceraldehyde 3-phosphate and glycerone phosphate from D-glucose: step 4/4. In terms of biological role, catalyzes the aldol condensation of dihydroxyacetone phosphate (DHAP or glycerone-phosphate) with glyceraldehyde 3-phosphate (G3P) to form fructose 1,6-bisphosphate (FBP) in gluconeogenesis and the reverse reaction in glycolysis. The protein is Fructose-bisphosphate aldolase 2 (FBA2) of Paracoccidioides lutzii (strain ATCC MYA-826 / Pb01) (Paracoccidioides brasiliensis).